The following is a 182-amino-acid chain: Bifunctional protein PyrR (182 aa).

The short motif at 98–110 is the PRPP-binding element; sequence VVLVDDVLFTGRS.

This sequence belongs to the purine/pyrimidine phosphoribosyltransferase family. PyrR subfamily.

The enzyme catalyses UMP + diphosphate = 5-phospho-alpha-D-ribose 1-diphosphate + uracil. Functionally, regulates the transcription of the pyrimidine nucleotide (pyr) operon in response to exogenous pyrimidines. Also displays a weak uracil phosphoribosyltransferase activity which is not physiologically significant. The polypeptide is Bifunctional protein PyrR (Dehalococcoides mccartyi (strain ATCC BAA-2100 / JCM 16839 / KCTC 5957 / BAV1)).